The primary structure comprises 160 residues: 2-C-methyl-D-erythritol 2,4-cyclodiphosphate synthase (160 aa).

The a divalent metal cation site is built by aspartate 12 and histidine 14. Residues 12–14 (DVH) and 38–39 (HS) each bind 4-CDP-2-C-methyl-D-erythritol 2-phosphate. An a divalent metal cation-binding site is contributed by histidine 46. Residues 60-62 (DIG), 65-69 (FPDTD), 136-139 (TTTE), phenylalanine 143, and arginine 146 contribute to the 4-CDP-2-C-methyl-D-erythritol 2-phosphate site.

Belongs to the IspF family. Homotrimer. Requires a divalent metal cation as cofactor.

It carries out the reaction 4-CDP-2-C-methyl-D-erythritol 2-phosphate = 2-C-methyl-D-erythritol 2,4-cyclic diphosphate + CMP. Its pathway is isoprenoid biosynthesis; isopentenyl diphosphate biosynthesis via DXP pathway; isopentenyl diphosphate from 1-deoxy-D-xylulose 5-phosphate: step 4/6. In terms of biological role, involved in the biosynthesis of isopentenyl diphosphate (IPP) and dimethylallyl diphosphate (DMAPP), two major building blocks of isoprenoid compounds. Catalyzes the conversion of 4-diphosphocytidyl-2-C-methyl-D-erythritol 2-phosphate (CDP-ME2P) to 2-C-methyl-D-erythritol 2,4-cyclodiphosphate (ME-CPP) with a corresponding release of cytidine 5-monophosphate (CMP). This is 2-C-methyl-D-erythritol 2,4-cyclodiphosphate synthase from Acinetobacter baumannii (strain AB307-0294).